Consider the following 335-residue polypeptide: Holliday junction branch migration complex subunit RuvB (335 aa).

A large ATPase domain (RuvB-L) region spans residues 4–184 (ADRIISTSAK…FGIVQRLEFY (181 aa)). Residues Ile23, Arg24, Gly65, Lys68, Thr69, Thr70, 131–133 (EDY), Arg174, Tyr184, and Arg221 each bind ATP. Thr69 is a Mg(2+) binding site. Residues 185-255 (AVEDLTSIVA…SAKAALLMLD (71 aa)) form a small ATPAse domain (RuvB-S) region. Positions 258-335 (DAGFDYLDRK…RYFGLEKLTE (78 aa)) are head domain (RuvB-H). The DNA site is built by Arg294, Arg313, and Arg318.

The protein belongs to the RuvB family. As to quaternary structure, homohexamer. Forms an RuvA(8)-RuvB(12)-Holliday junction (HJ) complex. HJ DNA is sandwiched between 2 RuvA tetramers; dsDNA enters through RuvA and exits via RuvB. An RuvB hexamer assembles on each DNA strand where it exits the tetramer. Each RuvB hexamer is contacted by two RuvA subunits (via domain III) on 2 adjacent RuvB subunits; this complex drives branch migration. In the full resolvosome a probable DNA-RuvA(4)-RuvB(12)-RuvC(2) complex forms which resolves the HJ.

The protein localises to the cytoplasm. The catalysed reaction is ATP + H2O = ADP + phosphate + H(+). The RuvA-RuvB-RuvC complex processes Holliday junction (HJ) DNA during genetic recombination and DNA repair, while the RuvA-RuvB complex plays an important role in the rescue of blocked DNA replication forks via replication fork reversal (RFR). RuvA specifically binds to HJ cruciform DNA, conferring on it an open structure. The RuvB hexamer acts as an ATP-dependent pump, pulling dsDNA into and through the RuvAB complex. RuvB forms 2 homohexamers on either side of HJ DNA bound by 1 or 2 RuvA tetramers; 4 subunits per hexamer contact DNA at a time. Coordinated motions by a converter formed by DNA-disengaged RuvB subunits stimulates ATP hydrolysis and nucleotide exchange. Immobilization of the converter enables RuvB to convert the ATP-contained energy into a lever motion, pulling 2 nucleotides of DNA out of the RuvA tetramer per ATP hydrolyzed, thus driving DNA branch migration. The RuvB motors rotate together with the DNA substrate, which together with the progressing nucleotide cycle form the mechanistic basis for DNA recombination by continuous HJ branch migration. Branch migration allows RuvC to scan DNA until it finds its consensus sequence, where it cleaves and resolves cruciform DNA. The chain is Holliday junction branch migration complex subunit RuvB from Pasteurella multocida (strain Pm70).